The chain runs to 153 residues: Flagellar assembly factor FliW (153 aa).

Belongs to the FliW family. Interacts with translational regulator CsrA and flagellin(s).

It localises to the cytoplasm. In terms of biological role, acts as an anti-CsrA protein, binds CsrA and prevents it from repressing translation of its target genes, one of which is flagellin. Binds to flagellin and participates in the assembly of the flagellum. In Heliobacterium modesticaldum (strain ATCC 51547 / Ice1), this protein is Flagellar assembly factor FliW.